Here is an 829-residue protein sequence, read N- to C-terminus: Probable methyltransferase PMT26 (829 aa).

Over 1-17 (MAQPRYTRIDNRRPSSN) the chain is Cytoplasmic. Residues 18 to 38 (YCSTVTVVVFVALCLVGIWMM) traverse the membrane as a helical; Signal-anchor for type II membrane protein segment. The Lumenal portion of the chain corresponds to 39 to 829 (TSSSVGPAQN…EVETLTYAIG (791 aa)). Positions 55–258 (DNKDGIKKQM…TSGDLSPPGA (204 aa)) are disordered. Basic and acidic residues-rich tracts occupy residues 85–143 (NEDK…DSKS), 151–160 (LDEKKDLKDN), 168–177 (TNEKQTKPET), and 187–231 (ENQK…KENT). Residues Asn-215, Asn-247, Asn-264, and Asn-270 are each glycosylated (N-linked (GlcNAc...) asparagine). Residues 241 to 252 (QEGQSKNETSGD) are compositionally biased toward polar residues. The interval 271-291 (GSFSTQATESKNEKEAQKGSG) is disordered. Residues 280–291 (SKNEKEAQKGSG) show a composition bias toward basic and acidic residues. 4 N-linked (GlcNAc...) asparagine glycosylation sites follow: Asn-302, Asn-579, Asn-595, and Asn-756.

This sequence belongs to the methyltransferase superfamily.

The protein resides in the golgi apparatus membrane. The sequence is that of Probable methyltransferase PMT26 from Arabidopsis thaliana (Mouse-ear cress).